The chain runs to 178 residues: Interleukin-10 (178 aa).

The N-terminal stretch at 1–18 (MPGSALLCCLLLLAGVKT) is a signal peptide. N29 carries an N-linked (GlcNAc...) asparagine glycan. 2 cysteine pairs are disulfide-bonded: C30/C126 and C80/C132. A glycan (N-linked (GlcNAc...) asparagine) is linked at N134.

This sequence belongs to the IL-10 family. In terms of assembly, homodimer. Interacts with IL10RA and IL10RB.

It is found in the secreted. Functionally, major immune regulatory cytokine that acts on many cells of the immune system where it has profound anti-inflammatory functions, limiting excessive tissue disruption caused by inflammation. Mechanistically, IL10 binds to its heterotetrameric receptor comprising IL10RA and IL10RB leading to JAK1 and STAT2-mediated phosphorylation of STAT3. In turn, STAT3 translocates to the nucleus where it drives expression of anti-inflammatory mediators. Targets antigen-presenting cells (APCs) such as macrophages and monocytes and inhibits their release of pro-inflammatory cytokines including granulocyte-macrophage colony-stimulating factor /GM-CSF, granulocyte colony-stimulating factor/G-CSF, IL-1 alpha, IL-1 beta, IL-6, IL-8 and TNF-alpha. Also interferes with antigen presentation by reducing the expression of MHC-class II and co-stimulatory molecules, thereby inhibiting their ability to induce T cell activation. In addition, controls the inflammatory response of macrophages by reprogramming essential metabolic pathways including mTOR signaling. The chain is Interleukin-10 (Il10) from Rattus norvegicus (Rat).